The following is a 394-amino-acid chain: MQTACSGNLCGYQLMFSLSTVVTVCRSLRSRNRHWFLKLLGVRLTIAMRCALENISNVAKNNVQAAAKKEIKQKRGMTKSKATSSLQSVIGLHVEPVEKVQSPEPMDMSEVSNALEAFSQNILEMGVDDIDKDDHENPQLCSEYVNDIYLYMRHLEREFKVRTDYMAMQEITERMRTILIDWLVQVHLRFHLLQETLFLTIQILDRYLEGASVSKTKLQLVGVTSMLIAAYEEMYAEIGDFVYITDNAYSKAQIRAMECNILRKLDFNLGKPLCIHFLRRCSKAGGVDGHKHTLSKYIMELTLXEYSFVKYDXEIAAAALLSTRFWDEDMEWTKSLVHYSAYSEGHLGPIVQKMAVLSQQSHPSPNSRLDQEEDMASSKFMSDQQATQELKSIR.

A disordered region spans residues 360 to 394 (QSHPSPNSRLDQEEDMASSKFMSDQQATQELKSIR). Residues 379-394 (KFMSDQQATQELKSIR) are compositionally biased toward polar residues.

It belongs to the cyclin family. Cyclin AB subfamily. Interacts with the CDK1 protein kinase to form a serine/threonine kinase holoenzyme complex also known as maturation promoting factor (MPF). The cyclin subunit imparts substrate specificity to the complex.

Its function is as follows. Essential for the control of the cell cycle at the G2/M (mitosis) transition. The sequence is that of G2/mitotic-specific cyclin-B from Patiria pectinifera (Starfish).